The following is a 198-amino-acid chain: Dual specificity protein phosphatase 14 (198 aa).

Residues 26-167 (GIAQITSSLF…LIDYESQLFG (142 aa)) form the Tyrosine-protein phosphatase domain. Cys-111 serves as the catalytic Phosphocysteine intermediate.

This sequence belongs to the protein-tyrosine phosphatase family. Non-receptor class dual specificity subfamily.

It catalyses the reaction O-phospho-L-tyrosyl-[protein] + H2O = L-tyrosyl-[protein] + phosphate. The enzyme catalyses O-phospho-L-seryl-[protein] + H2O = L-seryl-[protein] + phosphate. It carries out the reaction O-phospho-L-threonyl-[protein] + H2O = L-threonyl-[protein] + phosphate. Involved in the inactivation of MAP kinases. Dephosphorylates ERK, JNK and p38 MAP-kinases. Plays a negative role in TCR signaling by dephosphorylating MAP3K7 adapter TAB1 leading to its inactivation. This Mus musculus (Mouse) protein is Dual specificity protein phosphatase 14 (Dusp14).